The primary structure comprises 258 residues: Type III pantothenate kinase (258 aa).

An ATP-binding site is contributed by 6–13; sequence DVGNTNTV. Residues Tyr-100 and 107–110 contribute to the substrate site; that span reads GADR. The active-site Proton acceptor is the Asp-109. Residue Asp-129 participates in K(+) binding. Position 132 (Thr-132) interacts with ATP. Thr-184 is a binding site for substrate.

This sequence belongs to the type III pantothenate kinase family. As to quaternary structure, homodimer. NH4(+) serves as cofactor. The cofactor is K(+).

It localises to the cytoplasm. The enzyme catalyses (R)-pantothenate + ATP = (R)-4'-phosphopantothenate + ADP + H(+). It participates in cofactor biosynthesis; coenzyme A biosynthesis; CoA from (R)-pantothenate: step 1/5. In terms of biological role, catalyzes the phosphorylation of pantothenate (Pan), the first step in CoA biosynthesis. This Geobacillus thermodenitrificans (strain NG80-2) protein is Type III pantothenate kinase.